The chain runs to 874 residues: Alanine--tRNA ligase (874 aa).

The Zn(2+) site is built by His564, His568, Cys665, and His669.

It belongs to the class-II aminoacyl-tRNA synthetase family. Zn(2+) serves as cofactor.

It localises to the cytoplasm. It catalyses the reaction tRNA(Ala) + L-alanine + ATP = L-alanyl-tRNA(Ala) + AMP + diphosphate. Functionally, catalyzes the attachment of alanine to tRNA(Ala) in a two-step reaction: alanine is first activated by ATP to form Ala-AMP and then transferred to the acceptor end of tRNA(Ala). Also edits incorrectly charged Ser-tRNA(Ala) and Gly-tRNA(Ala) via its editing domain. The sequence is that of Alanine--tRNA ligase from Cupriavidus necator (strain ATCC 17699 / DSM 428 / KCTC 22496 / NCIMB 10442 / H16 / Stanier 337) (Ralstonia eutropha).